A 1522-amino-acid chain; its full sequence is MVDGTYVNSSVEAISGEADTAAVAELANQMVMNFLYESSSWLAQSTGPFLWKGFRFLFLRLPSSLLVYLINGTVPFYLVVLGSVFTPIIVYLILRSRVLSAYSRLKGDNEDEVIDKKKQLVNDSEAMLMGGPDGKRRSGFSSYLDEFLSAIKIFGYLDKLVFHELTKSMRTQRLEQGEVMLLDDSVGFAIVVEGGLHIYHKIAHSQGSTRESMPLPEDRSFDSNEDDLTINGERFQLLNKVKAGNPVSSLVSILKLFTDNHTPTVVDSSKSSPKQSAQVPIRQLISPFLDGNVERNKATLNMKQVPTAEYEIPSAERAGSNVSSFTQQLYESMLPKDHAAEDVREPLPEIVAYAASDCAIAVIPASSFKRLMVKYPRSASQIIQVILTKLYRVTFQTAHSYLGLTKEIMHTEVVLNNSTNFELPYYLQEAILRKIKNGSKESSVQESIHRATLRSKNVHAHNSPTPNKISRHIALESRDQYNPGDLLSNVPLSRKGSKTASSSSVSIPRISSLRHQKEAASSPLATLRRLEGNDSQNFAPLSSSSPMSVSEKPSVVGGGAHDNISQISFSSALEETEESSWRMALVESMFGYLGITNESIMPPTEDLLFLNNRASSGSSVCSVSSYSHPQTINQDLFRCLSPELVRTKKKAPRQKYTEEMPINVDFNTAKEEFAEGLETLFIPSGATIVEQNGNNKGLYYIVSGELLVCWKNEEDNIEYVLYTVKPGGIAGYLASLIGFKSFVSLRAKTDLYVGFLPIEVLERLCDKYFMIYLKIAETLTKLLSPKILKLDYALEWIHLEASETLFNQNDPANAIYVVLNGRLRQLHQKSKNEERLSRPTTQRKKRKDDNQPNVQVVGEYSQGCSFGEVEVLTAMNRVSTVVAVRDTELARIPRTLFEVLALEHPSIMIRVSRLVAHKILQRSSDIREPTKIVNSANGYRYDFNLTIPPSAGTSSWGNNSDGGSISYKTITILPITYGLPVEEFANKLVSTFRQVGRSTIGLTQCTTLKHLGRHAFDKLANLKQSGYFAELEELYELVVYIADTPVKSSWTSTCISQGDCILLLADASSDPEIGEFERLLINNRTTARTELLLLHPERYVEPGLTHKWLRKRTWVHQHHHMQFVSSQNPSERVDSKAPPIPGAPPNLIGRLKKRERLNQLTKRTQENFARLLPDSIKLTVENISMKYIQKKQKYYTPVSAHKNDFLRLARILSGQAIGLVLGGGGARGISHLGILKAIEEHGIPIDMIGGTSIGSFVGGLYAKDYDLVPTYGRVKKFAGRIGSIWRMLSDLTWPVTSYTTGHEFNRGIWKAFGDIRIEDFWIQYYCNSTNITESMQEIHTFGYAWRYVRASMSLAGILPPITDNGNMLLDGGYLDNLPVLEMKARGCKTIFAVDVGSVDDRTPMDYGDSLNGFWIVLNRWNPFSKHPNVPSMAEIQMRLGYVASVNALEKAKTTQGVVYFRPPIEDYATLDFAKFEEIYQVGTAYGATFLHELEQNGKLPRIPGNEPANGPGIHLLHRRNSI.

The Lumenal segment spans residues 1–73 (MVDGTYVNSS…SLLVYLINGT (73 aa)). A helical membrane pass occupies residues 74-94 (VPFYLVVLGSVFTPIIVYLIL). Residues 95–1522 (RSRVLSAYSR…IHLLHRRNSI (1428 aa)) lie on the Cytoplasmic side of the membrane. Disordered stretches follow at residues 443-468 (SVQESIHRATLRSKNVHAHNSPTPNK), 485-523 (DLLSNVPLSRKGSKTASSSSVSIPRISSLRHQKEAASSP), and 535-556 (SQNFAPLSSSSPMSVSEKPSVV). Low complexity-rich tracts occupy residues 498–511 (KTASSSSVSIPRIS) and 540–555 (PLSSSSPMSVSEKPSV). Residues 661-782 (PINV…LTKL) and 778-918 (TLTK…VAHK) contribute to the a nucleoside 3',5'-cyclic phosphate site. Disordered stretches follow at residues 828–852 (QKSKNEERLSRPTTQRKKRKDDNQP) and 1125–1145 (SSQNPSERVDSKAPPIPGAPP). In terms of domain architecture, PNPLA spans 1219–1383 (LVLGGGGARG…LDNLPVLEMK (165 aa)). A GXGXXG motif is present at residues 1223-1228 (GGGARG). The GXSXG signature appears at 1250-1254 (GTSIG). Ser1252 acts as the Nucleophile in catalysis. Asp1370 serves as the catalytic Proton acceptor. Residues 1370–1372 (DGG) carry the DGA/G motif.

Belongs to the NTE family.

It localises to the endoplasmic reticulum membrane. It carries out the reaction a 1-acyl-sn-glycero-3-phosphocholine + H2O = sn-glycerol 3-phosphocholine + a fatty acid + H(+). With respect to regulation, inhibited by organophosphorus esters. Intracellular phospholipase B that catalyzes the double deacylation of phosphatidylcholine (PC) to glycerophosphocholine (GroPCho). Plays an important role in membrane lipid homeostasis. Responsible for the rapid PC turnover in response to inositol, elevated temperatures, or when choline is present in the growth medium. The polypeptide is Lysophospholipase NTE1 (NTE1) (Eremothecium gossypii (strain ATCC 10895 / CBS 109.51 / FGSC 9923 / NRRL Y-1056) (Yeast)).